Consider the following 274-residue polypeptide: Large ribosomal subunit protein uL2 (274 aa).

The disordered stretch occupies residues 220-259 (VRGAAMNPRDHPHGGGEGRAPRGMSTPKTKWGKPARGVKT). Residues 227–239 (PRDHPHGGGEGRA) show a composition bias toward basic and acidic residues. Over residues 249–259 (KWGKPARGVKT) the composition is skewed to basic residues.

It belongs to the universal ribosomal protein uL2 family. As to quaternary structure, part of the 50S ribosomal subunit. Forms a bridge to the 30S subunit in the 70S ribosome.

Its function is as follows. One of the primary rRNA binding proteins. Required for association of the 30S and 50S subunits to form the 70S ribosome, for tRNA binding and peptide bond formation. It has been suggested to have peptidyltransferase activity; this is somewhat controversial. Makes several contacts with the 16S rRNA in the 70S ribosome. This chain is Large ribosomal subunit protein uL2, found in Chloroflexus aggregans (strain MD-66 / DSM 9485).